Reading from the N-terminus, the 779-residue chain is Membrane metallo-endopeptidase-like 1 (779 aa).

The Cytoplasmic segment spans residues 1–27 (MGKSEGPVGMVESAGRAGQKRPGFLEG). The chain crosses the membrane as a helical; Signal-anchor for type II membrane protein span at residues 28–48 (GLLLLLLLVTAALVALGVLYA). Residues 49–779 (DRRGKQLPRL…MHPKERCRVW (731 aa)) lie on the Lumenal side of the membrane. The Peptidase M13 domain maps to 88-779 (VCTTPGCVIA…MHPKERCRVW (692 aa)). Intrachain disulfides connect cysteine 89-cysteine 94, cysteine 112-cysteine 764, cysteine 120-cysteine 724, cysteine 175-cysteine 439, and cysteine 650-cysteine 776. Arginine 135 contacts a peptide. N-linked (GlcNAc...) asparagine glycosylation is found at asparagine 177, asparagine 207, asparagine 350, and asparagine 530. A coiled-coil region spans residues 515 to 560 (LEEMNRRLDEEYSNLNFSEDLYFENSLQNLKVGAQRSLRKLREKVD). Histidine 613 is a Zn(2+) binding site. Residue glutamate 614 is part of the active site. Zn(2+) is bound at residue histidine 617. A glycan (N-linked (GlcNAc...) asparagine) is linked at asparagine 657. Residue glutamate 676 coordinates Zn(2+). The Proton donor role is filled by aspartate 680.

The protein belongs to the peptidase M13 family. Zn(2+) serves as cofactor. N-glycosylated. Predominantly expressed in testis. Weakly expressed in brain, kidney and heart.

The protein resides in the membrane. The protein localises to the secreted. The enzyme catalyses Preferential cleavage of polypeptides between hydrophobic residues, particularly with Phe or Tyr at P1'.. With respect to regulation, inhibited by thiorphan and phosphoramidon. Its function is as follows. Metalloprotease involved in sperm function, possibly by modulating the processes of fertilization and early embryonic development. Degrades a broad variety of small peptides with a preference for peptides shorter than 3 kDa containing neutral bulky aliphatic or aromatic amino acid residues. Shares the same substrate specificity with MME and cleaves peptides at the same amide bond. The sequence is that of Membrane metallo-endopeptidase-like 1 (MMEL1) from Homo sapiens (Human).